An 89-amino-acid chain; its full sequence is MSITPERKQEMIKDYATKEGDTGSPEVQVAILTERITNLTEHFKIHKKDNHSRRGLLMMVSQRRRLLDYLKGKNVKRYEDLIGRLGIRK.

A compositionally biased stretch (basic and acidic residues) spans 1-21 (MSITPERKQEMIKDYATKEGD). The disordered stretch occupies residues 1–23 (MSITPERKQEMIKDYATKEGDTG).

The protein belongs to the universal ribosomal protein uS15 family. Part of the 30S ribosomal subunit. Forms a bridge to the 50S subunit in the 70S ribosome, contacting the 23S rRNA.

Its function is as follows. One of the primary rRNA binding proteins, it binds directly to 16S rRNA where it helps nucleate assembly of the platform of the 30S subunit by binding and bridging several RNA helices of the 16S rRNA. Forms an intersubunit bridge (bridge B4) with the 23S rRNA of the 50S subunit in the ribosome. The sequence is that of Small ribosomal subunit protein uS15 from Rhodospirillum rubrum (strain ATCC 11170 / ATH 1.1.1 / DSM 467 / LMG 4362 / NCIMB 8255 / S1).